The following is a 438-amino-acid chain: Adenylosuccinate synthetase (438 aa).

GTP contacts are provided by residues 12–18 and 40–42; these read GDEGKGK and GHT. The Proton acceptor role is filled by aspartate 13. Residues aspartate 13 and glycine 40 each coordinate Mg(2+). IMP contacts are provided by residues 13–16, 38–41, threonine 128, arginine 142, glutamine 223, threonine 238, and arginine 302; these read DEGK and NAGH. Histidine 41 (proton donor) is an active-site residue. 298–304 is a binding site for substrate; sequence TTTGRPR. GTP-binding positions include arginine 304, 330–332, and 412–414; these read KLD and GVG.

It belongs to the adenylosuccinate synthetase family. In terms of assembly, homodimer. Mg(2+) serves as cofactor.

It localises to the cytoplasm. It catalyses the reaction IMP + L-aspartate + GTP = N(6)-(1,2-dicarboxyethyl)-AMP + GDP + phosphate + 2 H(+). It functions in the pathway purine metabolism; AMP biosynthesis via de novo pathway; AMP from IMP: step 1/2. Its function is as follows. Plays an important role in the de novo pathway of purine nucleotide biosynthesis. Catalyzes the first committed step in the biosynthesis of AMP from IMP. The chain is Adenylosuccinate synthetase from Leifsonia xyli subsp. xyli (strain CTCB07).